The following is a 240-amino-acid chain: Enoyl-CoA delta isomerase 2, peroxisomal (240 aa).

The Microbody targeting signal signature appears at 238–240; it reads PKL.

The protein belongs to the enoyl-CoA hydratase/isomerase family.

It is found in the peroxisome. It catalyses the reaction a (3Z)-enoyl-CoA = a 4-saturated (2E)-enoyl-CoA. The enzyme catalyses a (3E)-enoyl-CoA = a 4-saturated (2E)-enoyl-CoA. Its pathway is lipid metabolism; fatty acid beta-oxidation. Able to isomerize both 3-cis and 3-trans double bonds into the 2-trans form in a range of enoyl-CoA species. Essential for the beta oxidation of unsaturated fatty acids. Involved with IBR1 and IBR3 in the peroxisomal beta-oxidation of indole-3-butyric acid (IBA) to form indole-3-acetic acid (IAA), a biologically active auxin. This chain is Enoyl-CoA delta isomerase 2, peroxisomal, found in Arabidopsis thaliana (Mouse-ear cress).